The following is a 723-amino-acid chain: uncharacterized protein (723 aa).

The span at 1–12 (MTGKKKNRHQKK) shows a compositional bias: basic residues. 4 disordered regions span residues 1 to 166 (MTGK…EKEI), 181 to 212 (IKRK…SGWG), 268 to 289 (LPLS…DNDN), and 391 to 455 (KNKS…NTST). Positions 30-42 (DETTTTTTTTTTT) are enriched in low complexity. 2 stretches are compositionally biased toward basic and acidic residues: residues 45-129 (EETK…KTDD) and 149-166 (TDIK…EKEI). Residues 53-173 (IVENKDEDKK…KEIEDPNKKY (121 aa)) are a coiled coil. Positions 181–190 (IKRKKEKKVK) are enriched in basic residues. The span at 193–204 (PVQPTPPVPAPA) shows a compositional bias: pro residues. Residues 272–288 (DTEDSDNDNDNGGDDND) show a composition bias toward acidic residues. The segment covering 397–455 (DENNNNNNNNNQQQPQQQQTTSPTLSTSPTSPKSPTTTTTNTTTTTTTNTNNNNNNTST) has biased composition (low complexity).

This is an uncharacterized protein from Dictyostelium discoideum (Social amoeba).